Here is a 667-residue protein sequence, read N- to C-terminus: Small ribosomal subunit protein mS39 (667 aa).

The N-terminal 11 residues, 1–11 (MASSCSQALRH), are a transit peptide targeting the mitochondrion. Positions 199–226 (EAEQRSEEMEDIQDETQTKKGRSPKASD) are disordered. 6 PPR repeats span residues 249–283 (NTRS…RLKA), 284–323 (DVHI…KVKP), 324–360 (NLLT…SIEP), 361–400 (SLAS…SFTP), 482–516 (SSNA…GHGN), and 565–599 (TASS…NRVP).

The protein belongs to the mitochondrion-specific ribosomal protein mS39 family.

It localises to the mitochondrion. Mitochondrial RNA-binding protein that may have a role in mitochondrial translation. This Danio rerio (Zebrafish) protein is Small ribosomal subunit protein mS39 (ptcd3).